We begin with the raw amino-acid sequence, 397 residues long: Mitochondrial inner membrane magnesium transporter LPE10 (397 aa).

A mitochondrion-targeting transit peptide spans 1 to 37 (MLLVNRAITLNLVKRCCWRSTMFMTPKRFLGTSEEES). A helical membrane pass occupies residues 316 to 336 (LMLLGIRFSIGMLSLGGPIFI). Residues 340–343 (YGMN) carry the YGMN motif. The helical transmembrane segment at 354–374 (GFIAASAIGMISLGALYFYSI) threads the bilayer.

This sequence belongs to the CorA metal ion transporter (MIT) (TC 1.A.35) family. As to quaternary structure, forms homooligomers. Interacts with MRS2.

Its subcellular location is the mitochondrion inner membrane. Functionally, mitochondrial inner membrane magnesium transporter required for mitochondrial magnesium homeostasis. Modulates the conductance of the MRS2 channel. Involved in the splicing of mRNA group II introns in mitochondria by affecting mitochondrial magnesium concentrations, which are critical for group II intron splicing. The chain is Mitochondrial inner membrane magnesium transporter LPE10 (LPE10) from Candida glabrata (strain ATCC 2001 / BCRC 20586 / JCM 3761 / NBRC 0622 / NRRL Y-65 / CBS 138) (Yeast).